Reading from the N-terminus, the 628-residue chain is Phosphomethylpyrimidine synthase (628 aa).

Residues N228, M257, Y286, H322, 342-344, 383-386, and E422 contribute to the substrate site; these read SRG and DGLR. H426 is a Zn(2+) binding site. Y449 contacts substrate. Residue H490 coordinates Zn(2+). [4Fe-4S] cluster is bound by residues C570, C573, and C578.

This sequence belongs to the ThiC family. As to quaternary structure, homodimer. [4Fe-4S] cluster is required as a cofactor.

The catalysed reaction is 5-amino-1-(5-phospho-beta-D-ribosyl)imidazole + S-adenosyl-L-methionine = 4-amino-2-methyl-5-(phosphooxymethyl)pyrimidine + CO + 5'-deoxyadenosine + formate + L-methionine + 3 H(+). The protein operates within cofactor biosynthesis; thiamine diphosphate biosynthesis. Functionally, catalyzes the synthesis of the hydroxymethylpyrimidine phosphate (HMP-P) moiety of thiamine from aminoimidazole ribotide (AIR) in a radical S-adenosyl-L-methionine (SAM)-dependent reaction. In Methylibium petroleiphilum (strain ATCC BAA-1232 / LMG 22953 / PM1), this protein is Phosphomethylpyrimidine synthase.